We begin with the raw amino-acid sequence, 494 residues long: Monocarboxylate transporter 1 (494 aa).

Residues 1-22 are Cytoplasmic-facing; the sequence is MPPAIGGPVGYTPPDGGWGWAV. Residues 23–44 form a helical membrane-spanning segment; the sequence is VVGAFISIGFSYAFPKSITVFF. K38 contributes to the (S)-lactate binding site. Over 45-55 the chain is Extracellular; sequence KEIEIIFSATT. The helical transmembrane segment at 56–80 threads the bilayer; that stretch reads SEVSWISSIMLAVMYAGGPISSILV. Residues 81 to 84 are Cytoplasmic-facing; it reads NKYG. Residues 85-105 traverse the membrane as a helical segment; sequence SRPVMIAGGCLSGCGLIAASF. Topologically, residues 106–109 are extracellular; sequence CNTV. The helical transmembrane segment at 110-132 threads the bilayer; it reads QELYFCIGVIGGLGLAFNLNPAL. At 133–146 the chain is on the cytoplasmic side; sequence TMIGKYFYKKRPLA. The chain crosses the membrane as a helical span at residues 147–169; that stretch reads NGLAMAGSPVFLSTLAPLNQAFF. Over 170 to 174 the chain is Extracellular; it reads GIFGW. A helical transmembrane segment spans residues 175 to 194; it reads RGSFLILGGLLLNCCVAGSL. Residues 195–254 are Cytoplasmic-facing; sequence MRPIGPQQGKVEKLKSKESLQEAGKSDANTDLIGGSPKGEKLSVFQTVNKFLDLSLFTHR. Residues S210, S213, and S220 each carry the phosphoserine modification. T224 is modified (phosphothreonine). A Phosphoserine modification is found at S230. The chain crosses the membrane as a helical span at residues 255 to 281; that stretch reads GFLLYLSGNVVMFFGLFTPLVFLSNYG. Residues 282–288 are Extracellular-facing; the sequence is KSKHFSS. Residues 289 to 310 traverse the membrane as a helical segment; it reads EKSAFLLSILAFVDMVARPSMG. Residue D302 coordinates H(+). R306 provides a ligand contact to (S)-lactate. Topologically, residues 311–321 are cytoplasmic; the sequence is LAANTRWIRPR. A helical transmembrane segment spans residues 322 to 342; sequence VQYFFAASVVANGVCHLLAPL. At 343–346 the chain is on the extracellular side; sequence STTY. The helical transmembrane segment at 347–368 threads the bilayer; sequence VGFCIYAGVFGFAFGWLSSVLF. Topologically, residues 369–382 are cytoplasmic; the sequence is ETLMDLVGPQRFSS. A helical transmembrane segment spans residues 383 to 403; sequence AVGLVTIVECCPVLLGPPLLG. At 404–414 the chain is on the extracellular side; sequence RLNDMYGDYKY. A helical membrane pass occupies residues 415–436; that stretch reads TYWACGVILIIAGLYLFIGMGI. Topologically, residues 437 to 494 are cytoplasmic; sequence NYRLVAKEQKAEEKKRDGKEDETSTDVDEKPKKTMKETQSPAPLQNSSGDPAEEESPV. Residues 446–472 are compositionally biased toward basic and acidic residues; the sequence is KAEEKKRDGKEDETSTDVDEKPKKTMK. Positions 446–494 are disordered; sequence KAEEKKRDGKEDETSTDVDEKPKKTMKETQSPAPLQNSSGDPAEEESPV. T459 is modified (phosphothreonine). A Phosphoserine modification is found at S460. A Phosphothreonine modification is found at T461. A compositionally biased stretch (polar residues) spans 473 to 485; sequence ETQSPAPLQNSSG. 4 positions are modified to phosphoserine: S476, S483, S484, and S492.

It belongs to the major facilitator superfamily. Monocarboxylate porter (TC 2.A.1.13) family. Interacts with BSG. Interacts with EMB. Interaction with either BSG or EMB is required for expression at the cell membrane. As to expression, detected in erythrocytes (at protein level). Detected in brain, heart, kidney, lung, muscle, jejunum enterocytes and brain capillaries.

The protein localises to the cell membrane. Its subcellular location is the basolateral cell membrane. The protein resides in the apical cell membrane. The catalysed reaction is (S)-lactate(in) + H(+)(in) = (S)-lactate(out) + H(+)(out). The enzyme catalyses pyruvate(out) + H(+)(out) = pyruvate(in) + H(+)(in). It catalyses the reaction acetoacetate(out) + H(+)(out) = acetoacetate(in) + H(+)(in). It carries out the reaction (S)-3-hydroxybutanoate(out) + H(+)(out) = (S)-3-hydroxybutanoate(in) + H(+)(in). The catalysed reaction is (R)-3-hydroxybutanoate(out) + H(+)(out) = (R)-3-hydroxybutanoate(in) + H(+)(in). The enzyme catalyses 3-methyl-2-oxobutanoate(out) + H(+)(out) = 3-methyl-2-oxobutanoate(in) + H(+)(in). It catalyses the reaction 4-methyl-2-oxopentanoate(out) + H(+)(out) = 4-methyl-2-oxopentanoate(in) + H(+)(in). With respect to regulation, inhibited by stilbene disulfonates, such as di-isothiocyanostilbene disulfonate(DIDS), a cross-linking reagent that forms covalent linkages with lysine groups. Bidirectional proton-coupled monocarboxylate transporter. Catalyzes the rapid transport across the plasma membrane of many monocarboxylates such as lactate, pyruvate, acetate and the ketone bodies acetoacetate and beta-hydroxybutyrate, and thus contributes to the maintenance of intracellular pH. The transport direction is determined by the proton motive force and the concentration gradient of the substrate monocarboxylate. MCT1 is a major lactate exporter. Plays a role in cellular responses to a high-fat diet by modulating the cellular levels of lactate and pyruvate that contribute to the regulation of central metabolic pathways and insulin secretion, with concomitant effects on plasma insulin levels and blood glucose homeostasis. Facilitates the protonated monocarboxylate form of succinate export, that its transient protonation upon muscle cell acidification in exercising muscle and ischemic heart. Functions via alternate outward- and inward-open conformation states. Protonation and deprotonation of 302-Asp is essential for the conformational transition. The polypeptide is Monocarboxylate transporter 1 (Slc16a1) (Rattus norvegicus (Rat)).